The chain runs to 183 residues: UPF0114 protein HI_0507 (183 aa).

Transmembrane regions (helical) follow at residues 30–50 (LQVP…YKFI), 68–88 (IMLG…LVMV), and 150–170 (TMMW…ALAY).

The protein belongs to the UPF0114 family.

The protein localises to the cell membrane. The polypeptide is UPF0114 protein HI_0507 (Haemophilus influenzae (strain ATCC 51907 / DSM 11121 / KW20 / Rd)).